We begin with the raw amino-acid sequence, 257 residues long: RLA class II histocompatibility antigen, DP beta chain (257 aa).

The N-terminal stretch at 1–29 is a signal peptide; it reads MRPCRSLRTAALAVVLTVLLHPVALGRAT. The tract at residues 30-120 is beta-1; that stretch reads PGESEQNYLW…LFQGLPVLLQ (91 aa). At 30-224 the chain is on the extracellular side; that stretch reads PGESEQNYLW…KAQSDSARSK (195 aa). Intrachain disulfides connect Cys-45-Cys-105 and Cys-143-Cys-199. Asn-49 carries an N-linked (GlcNAc...) asparagine glycan. The interval 121–214 is beta-2; that stretch reads TQPRVSVSPS…SLDSPITVEW (94 aa). Residues 123–211 enclose the Ig-like C1-type domain; that stretch reads PRVSVSPSKK…EHPSLDSPIT (89 aa). The connecting peptide stretch occupies residues 215 to 224; it reads KAQSDSARSK. A helical membrane pass occupies residues 225-245; sequence MLAGVGGLVLGLVSLAVGVFM. The Cytoplasmic segment spans residues 246-257; the sequence is HRRSKKAQQGCR.

Belongs to the MHC class II family.

It localises to the membrane. This chain is RLA class II histocompatibility antigen, DP beta chain, found in Oryctolagus cuniculus (Rabbit).